A 262-amino-acid polypeptide reads, in one-letter code: Insulin-like growth factor-binding protein 1 (262 aa).

The signal sequence occupies residues 1–25 (MPEVPAVRAWPLLLSLALQLGAAAG). Residues 28 to 108 (QPLHCAPCSA…TRGQGACMPA (81 aa)) form the IGFBP N-terminal domain. 6 cysteine pairs are disulfide-bonded: Cys32–Cys59, Cys35–Cys61, Cys43–Cys62, Cys50–Cys65, Cys72–Cys85, and Cys79–Cys105. Positions 101 to 133 (GQGACMPAPSAEATETKDPAAPETTSPESTEMT) are disordered. The segment covering 121 to 131 (APETTSPESTE) has biased composition (low complexity). Residues Ser126, Ser129, and Ser147 each carry the phosphoserine modification. Residue Tyr161 is modified to Phosphotyrosine. A Thyroglobulin type-1 domain is found at 176-254 (KEPCQRELYK…STAVRGDPKC (79 aa)). Intrachain disulfides connect Cys179-Cys209, Cys220-Cys231, and Cys233-Cys254. Ser245 is modified (phosphoserine). A Cell attachment site motif is present at residues 249-251 (RGD).

As to quaternary structure, binds equally well IGF1 and IGF2. Interacts with integrin ITGA5:ITGB1. Interacts with VHL; this interaction inhibits HIF1A degradation.

The protein localises to the secreted. Multifunctional protein that plays a critical role in regulating the availability of IGFs such as IGF1 and IGF2 to their receptors and thereby regulates IGF-mediated cellular processes including cell migration, proliferation, differentiation or apoptosis in a cell-type specific manner. Also plays a positive role in cell migration by interacting with integrin ITGA5:ITGB1 through its RGD motif. Mechanistically, binding to integrins leads to activation of focal adhesion kinase/PTK2 and stimulation of the mitogen-activated protein kinase (MAPK) pathway. Regulates cardiomyocyte apoptosis by suppressing HIF-1alpha/HIF1A degradation through ubiquitination. This is Insulin-like growth factor-binding protein 1 (IGFBP1) from Sus scrofa (Pig).